A 162-amino-acid polypeptide reads, in one-letter code: Lectin BRA-3 (162 aa).

An N-terminal signal peptide occupies residues 1-24 (MQRSEIVQAVTLLVVVFAITTAEC). A C-type lectin domain is found at 25 to 152 (TCPGNLDWQE…NKNKNFLCKM (128 aa)). Intrachain disulfides connect Cys-26-Cys-39, Cys-56-Cys-150, and Cys-125-Cys-142.

As to quaternary structure, homotetramer; disulfide-linked. Coelemic fluid.

Functionally, sugar-binding protein which recognizes specific carbohydrate structures and agglutinates a variety of animal cells by binding to cell-surface glycoproteins and glycolipids. Calcium-dependent lectin. Invertebrate lectins may be involved in defense functions. This chain is Lectin BRA-3, found in Megabalanus rosa (Acorn barnacle).